The sequence spans 450 residues: Phosphoglucosamine mutase (450 aa).

Ser-103 acts as the Phosphoserine intermediate in catalysis. Mg(2+)-binding residues include Ser-103, Asp-243, Asp-245, and Asp-247. The residue at position 103 (Ser-103) is a Phosphoserine.

Belongs to the phosphohexose mutase family. Mg(2+) serves as cofactor. In terms of processing, activated by phosphorylation.

It catalyses the reaction alpha-D-glucosamine 1-phosphate = D-glucosamine 6-phosphate. Catalyzes the conversion of glucosamine-6-phosphate to glucosamine-1-phosphate. In Lactobacillus delbrueckii subsp. bulgaricus (strain ATCC BAA-365 / Lb-18), this protein is Phosphoglucosamine mutase.